Reading from the N-terminus, the 113-residue chain is Protein crumbs homolog 3 (113 aa).

An N-terminal signal peptide occupies residues 1-24; the sequence is MATPGLGVLLAFGLPMLPSGWSLT. The disordered stretch occupies residues 23 to 44; that stretch reads LTAPDPFTNSTTQPPGDESNGG. Over 25–49 the chain is Extracellular; the sequence is APDPFTNSTTQPPGDESNGGLSSGA. Residue Asn-31 is glycosylated (N-linked (GlcNAc...) asparagine). A helical membrane pass occupies residues 50–70; it reads IVAITVVFSILGVLLIAVGLF. At 71–113 the chain is on the cytoplasmic side; that stretch reads LLMRKLREKRQTEGTYRPSSEEQVGARAPPPPNLKLPPEERLI. The interaction with EPB41L5 stretch occupies residues 77 to 113; it reads REKRQTEGTYRPSSEEQVGARAPPPPNLKLPPEERLI. The interval 80–113 is disordered; that stretch reads RQTEGTYRPSSEEQVGARAPPPPNLKLPPEERLI. Over residues 83–92 the composition is skewed to polar residues; sequence EGTYRPSSEE. A PDZ-binding motif is present at residues 110-113; the sequence is ERLI.

Component of a complex composed of CRB3, PALS1 and PATJ. Interacts (via C-terminus) with PALS1 (via PDZ domain). Interacts with PARD6A. Interacts (via intracellular domain) with EPB41L5. Interacts with WDR83. Expressed in the apical renal tubules (at protein level). Expressed in the retinal pigment epithelium.

It is found in the apical cell membrane. The protein localises to the cell junction. Its subcellular location is the tight junction. Its function is as follows. Involved in the establishment of cell polarity in mammalian epithelial cells. Regulates the morphogenesis of tight junctions. Involved in promoting phosphorylation and cytoplasmic retention of transcriptional coactivators YAP1 and WWTR1/TAZ which leads to suppression of TGFB1-dependent transcription of target genes such as CCN2/CTGF, SERPINE1/PAI1, SNAI1/SNAIL1 and SMAD7. The chain is Protein crumbs homolog 3 (Crb3) from Mus musculus (Mouse).